The following is a 348-amino-acid chain: Protein RecA (348 aa).

69–76 (GPESSGKT) contacts ATP.

The protein belongs to the RecA family.

Its subcellular location is the cytoplasm. Its function is as follows. Can catalyze the hydrolysis of ATP in the presence of single-stranded DNA, the ATP-dependent uptake of single-stranded DNA by duplex DNA, and the ATP-dependent hybridization of homologous single-stranded DNAs. It interacts with LexA causing its activation and leading to its autocatalytic cleavage. The chain is Protein RecA from Picosynechococcus sp. (strain ATCC 27264 / PCC 7002 / PR-6) (Agmenellum quadruplicatum).